The primary structure comprises 542 residues: CTP synthase (542 aa).

The segment at 1-265 (MTRFIFITGG…DTQVLKFFGM (265 aa)) is amidoligase domain. Ser-13 provides a ligand contact to CTP. Ser-13 is a UTP binding site. 14–19 (SLGKGL) serves as a coordination point for ATP. Tyr-54 contributes to the L-glutamine binding site. Position 71 (Asp-71) interacts with ATP. 2 residues coordinate Mg(2+): Asp-71 and Glu-139. CTP is bound by residues 146–148 (DIE), 186–191 (KTKPTQ), and Lys-222. Residues 186 to 191 (KTKPTQ) and Lys-222 each bind UTP. The Glutamine amidotransferase type-1 domain occupies 291–541 (TIAVVGKYTS…IRAAIEQSRL (251 aa)). Gly-353 serves as a coordination point for L-glutamine. Residue Cys-380 is the Nucleophile; for glutamine hydrolysis of the active site. Residues 381–384 (FGMQ), Glu-404, and Arg-469 contribute to the L-glutamine site. Residues His-514 and Glu-516 contribute to the active site.

Belongs to the CTP synthase family. As to quaternary structure, homotetramer.

It catalyses the reaction UTP + L-glutamine + ATP + H2O = CTP + L-glutamate + ADP + phosphate + 2 H(+). The enzyme catalyses L-glutamine + H2O = L-glutamate + NH4(+). It carries out the reaction UTP + NH4(+) + ATP = CTP + ADP + phosphate + 2 H(+). It functions in the pathway pyrimidine metabolism; CTP biosynthesis via de novo pathway; CTP from UDP: step 2/2. Its activity is regulated as follows. Allosterically activated by GTP, when glutamine is the substrate; GTP has no effect on the reaction when ammonia is the substrate. The allosteric effector GTP functions by stabilizing the protein conformation that binds the tetrahedral intermediate(s) formed during glutamine hydrolysis. Inhibited by the product CTP, via allosteric rather than competitive inhibition. Its function is as follows. Catalyzes the ATP-dependent amination of UTP to CTP with either L-glutamine or ammonia as the source of nitrogen. Regulates intracellular CTP levels through interactions with the four ribonucleotide triphosphates. The chain is CTP synthase from Rhodospirillum centenum (strain ATCC 51521 / SW).